The following is a 555-amino-acid chain: MTSISLTIAPDLIHCGVPQRLSDTIILNDKPKITLLSYFDNIFTEANIIKAPKEHSVQSTVNIYVKLELLKRLYDRLQSVDTSTLPYISQIKEALRSFLHNDIQYVFTRIPDSEIDGNYVGVTTHGLSLFANAKNDAEEIERVQIDTPTEGNLTLKPISADGVEVVLDDSYINAVSKVIGPDVHKLIDKCCKEFPAHVGTILEEVKYCLILGKLRLAGGYDYNCPSSTTDVTRYGDFDKFRIKMFNKLTRFYNVSLALVPCNKLKMQYIFDSESEKINGDRTFLDQAWPAITSFIETHDLATKVKTDDPDTYVLKEVKSCKINSSTKQATLVNLDGNKLEWYKNNIYNAKLEDGIVINRELYEKAADKSYIKYNVKVVFASYALQKIIDEKSDKSITVDTSAGEMTLDKYRAIANVLNSIWKRGKDMAIKYFDYIKMGIEKATHLSLNLMKKYNITLDDVVSFIEKGPGYLATLQKLNDYKLIAKIIICHILPTIIQCVYKSDPNSKIMNSTLITNAVNLIRQDTKRYESSTGRKDANLVTHDASSLPLIRIYKT.

It localises to the virion. The protein is Putative outer capsid protein p10 (S10) of Saccharum officinarum (Sugarcane).